A 23-amino-acid polypeptide reads, in one-letter code: Prolamin alpha-3 (23 aa).

The chain is Prolamin alpha-3 from Dactylis glomerata (Orchard grass).